The chain runs to 595 residues: Aspartate--tRNA(Asp/Asn) ligase (595 aa).

An L-aspartate-binding site is contributed by Glu-175. The segment at Gln-199–Lys-202 is aspartate. Residues Arg-221 and His-454 each contribute to the L-aspartate site. Arg-221–Glu-223 serves as a coordination point for ATP. Glu-488 is an ATP binding site. Arg-495 is an L-aspartate binding site. An ATP-binding site is contributed by Gly-540–Arg-543.

The protein belongs to the class-II aminoacyl-tRNA synthetase family. Type 1 subfamily. In terms of assembly, homodimer.

It is found in the cytoplasm. It catalyses the reaction tRNA(Asx) + L-aspartate + ATP = L-aspartyl-tRNA(Asx) + AMP + diphosphate. Its function is as follows. Aspartyl-tRNA synthetase with relaxed tRNA specificity since it is able to aspartylate not only its cognate tRNA(Asp) but also tRNA(Asn). Reaction proceeds in two steps: L-aspartate is first activated by ATP to form Asp-AMP and then transferred to the acceptor end of tRNA(Asp/Asn). The chain is Aspartate--tRNA(Asp/Asn) ligase from Rhizobium meliloti (strain 1021) (Ensifer meliloti).